Consider the following 199-residue polypeptide: ATP-dependent Clp protease proteolytic subunit (199 aa).

Ser97 (nucleophile) is an active-site residue. His122 is an active-site residue.

It belongs to the peptidase S14 family. As to quaternary structure, fourteen ClpP subunits assemble into 2 heptameric rings which stack back to back to give a disk-like structure with a central cavity, resembling the structure of eukaryotic proteasomes.

It localises to the cytoplasm. It carries out the reaction Hydrolysis of proteins to small peptides in the presence of ATP and magnesium. alpha-casein is the usual test substrate. In the absence of ATP, only oligopeptides shorter than five residues are hydrolyzed (such as succinyl-Leu-Tyr-|-NHMec, and Leu-Tyr-Leu-|-Tyr-Trp, in which cleavage of the -Tyr-|-Leu- and -Tyr-|-Trp bonds also occurs).. In terms of biological role, cleaves peptides in various proteins in a process that requires ATP hydrolysis. Has a chymotrypsin-like activity. Plays a major role in the degradation of misfolded proteins. The polypeptide is ATP-dependent Clp protease proteolytic subunit (Citrifermentans bemidjiense (strain ATCC BAA-1014 / DSM 16622 / JCM 12645 / Bem) (Geobacter bemidjiensis)).